Reading from the N-terminus, the 627-residue chain is tRNA uridine 5-carboxymethylaminomethyl modification enzyme MnmG (627 aa).

FAD contacts are provided by residues 13 to 18, Val125, and Ser180; that span reads GGGHAG. Residue 274–288 coordinates NAD(+); it reads GPRYCPSIEDKVVRF. Gln371 is an FAD binding site.

It belongs to the MnmG family. Homodimer. Heterotetramer of two MnmE and two MnmG subunits. Requires FAD as cofactor.

The protein localises to the cytoplasm. NAD-binding protein involved in the addition of a carboxymethylaminomethyl (cmnm) group at the wobble position (U34) of certain tRNAs, forming tRNA-cmnm(5)s(2)U34. In Francisella tularensis subsp. holarctica (strain FTNF002-00 / FTA), this protein is tRNA uridine 5-carboxymethylaminomethyl modification enzyme MnmG.